Consider the following 575-residue polypeptide: Transport inhibitor response 1-like protein Os04g0395600 (575 aa).

Positions 1 to 45 (MTYFPEEVVEHIFSFLPAQRDRNTVSLVCKVWYEIERLSRRGVFV) constitute an F-box domain. Residue K69 participates in 1D-myo-inositol hexakisphosphate binding. An interaction with auxin-responsive proteins region spans residues 76–77 (DF). Residues 108–109 (KR) and R340 each bind 1D-myo-inositol hexakisphosphate. The interaction with auxin-responsive proteins stretch occupies residues 343–348 (PSDFYV). Residue 396–398 (RFR) coordinates 1D-myo-inositol hexakisphosphate. Positions 400 to 404 (CILEP) are interaction with auxin-responsive proteins. R431 provides a ligand contact to 1D-myo-inositol hexakisphosphate. An interaction with auxin-responsive proteins region spans residues 459–460 (AF). Residues 479–480 (RK) and R504 each bind 1D-myo-inositol hexakisphosphate.

Part of a SCF (SKP1-cullin-F-box) protein ligase complex. May interact with auxin and auxin-responsive proteins.

Its subcellular location is the nucleus. It functions in the pathway protein modification; protein ubiquitination. The chain is Transport inhibitor response 1-like protein Os04g0395600 from Oryza sativa subsp. japonica (Rice).